A 215-amino-acid chain; its full sequence is N-(5'-phosphoribosyl)anthranilate isomerase (215 aa).

Belongs to the TrpF family.

The catalysed reaction is N-(5-phospho-beta-D-ribosyl)anthranilate = 1-(2-carboxyphenylamino)-1-deoxy-D-ribulose 5-phosphate. It functions in the pathway amino-acid biosynthesis; L-tryptophan biosynthesis; L-tryptophan from chorismate: step 3/5. This Cellvibrio japonicus (strain Ueda107) (Pseudomonas fluorescens subsp. cellulosa) protein is N-(5'-phosphoribosyl)anthranilate isomerase.